The chain runs to 1502 residues: Leucine-rich repeat-containing protein 9 (1502 aa).

LRR repeat units lie at residues 53–79, 97–119, 120–141, 142–164, 166–188, 224–247, 296–320, 699–721, 722–744, 746–764, 765–790, 792–814, 822–849, 894–916, 917–938, 939–960, 961–983, 985–1009, 1011–1030, 1031–1053, 1100–1123, 1124–1146, 1147–1170, 1209–1232, 1234–1255, 1256–1278, 1280–1301, 1302–1325, and 1327–1351; these read FPNLTQLILVGQNIHCIAGLESCHFLK, CADLQKLYLYHNEISVIEGLENL, LKLEVLWLNNNQINVIEGLDMM, QNLKELNLANNLIHSIGESLDPN, QLERLNLSGNKISSFKELTNLAR, LQRLDTYDVSEKQIKNLAESTVVK, EHELTDMKSSGNMQANIPISNKFHE, YSQITVLNLHGNSLSKLKDISRL, NGLRKLIISFNEFSSLEDVSYLT, LEYLDASHNQVITLEGFKG, LGKLKYLDLSWNKLTNSREDLHILRK, AIQLSSLDIRYNFWQKPASVLKD, LTHLNGVTITEDEISEALQISSGSRITQ, YTKITSLTLDSQNLVRITNLEKL, VNLRWASFSSNHLTKIEGLEHC, VNLEELNLDDNSISKLEGLSKL, TKLRRLSINNNLLAGFDRHVIES, SHLHFLSAENNNISSLAGLQRGYKL, ELYLSNNCISSNQEIYSLKG, LNNLVILDMWGNPILLKHENYRL, FTELQDLNWRTSSIRSIDLVPADH, FRNVQTVNLENNNLTSFSGLIFL, PNIKNLYLNHNRIESILPQQKSQS, MQSLEVLHLGYNGINSLPMLQLGR, RNLKSLYLQGNEISHVEGLENL, QFLRELVLDHNRIKAIAETSFAK, NSLVSLNLEENRLRDLNNLPPL, LKLRKLLIGSNKIQEISEIEKLEV, and PALVELSISGNPISRKPFLRNLLVV. Residues 317–342 are disordered; it reads KFHENNCDTEESNSQQSSERRKNNSD. A compositionally biased stretch (polar residues) spans 1479 to 1496; it reads TQQSGQARSQQKHPFNQE. The segment at 1479–1502 is disordered; that stretch reads TQQSGQARSQQKHPFNQENEGRCV.

This Xenopus tropicalis (Western clawed frog) protein is Leucine-rich repeat-containing protein 9 (lrrc9).